A 237-amino-acid polypeptide reads, in one-letter code: Germination-specific N-acetylmuramoyl-L-alanine amidase (237 aa).

Positions 1-27 (MRKKLKWLSFLLGFIILLFLFKYQFSN) are cleaved as a signal peptide. Residues 43-226 (IYLDPGHGGP…VASSIYKGIL (184 aa)) enclose the MurNAc-LAA domain.

This sequence belongs to the N-acetylmuramoyl-L-alanine amidase 3 family.

The protein resides in the secreted. The enzyme catalyses Hydrolyzes the link between N-acetylmuramoyl residues and L-amino acid residues in certain cell-wall glycopeptides.. In terms of biological role, cleaves the peptide side chain from the N-acetylmuramic acid residues in peptidoglycan. This is a step in the formation of muramic delta-lactam residues in spore cortex. This is Germination-specific N-acetylmuramoyl-L-alanine amidase (cwlD) from Bacillus subtilis (strain 168).